Consider the following 286-residue polypeptide: Shikimate dehydrogenase (NADP(+)) (286 aa).

Residues 25-27 (SLS) and T72 contribute to the shikimate site. The active-site Proton acceptor is K76. Position 88 (E88) interacts with NADP(+). The shikimate site is built by N97 and D113. Residues 138 to 142 (GSGGA), 162 to 167 (NRTIER), and I232 contribute to the NADP(+) site. Y234 serves as a coordination point for shikimate. G255 is a binding site for NADP(+).

Belongs to the shikimate dehydrogenase family. Homodimer.

It carries out the reaction shikimate + NADP(+) = 3-dehydroshikimate + NADPH + H(+). It functions in the pathway metabolic intermediate biosynthesis; chorismate biosynthesis; chorismate from D-erythrose 4-phosphate and phosphoenolpyruvate: step 4/7. Functionally, involved in the biosynthesis of the chorismate, which leads to the biosynthesis of aromatic amino acids. Catalyzes the reversible NADPH linked reduction of 3-dehydroshikimate (DHSA) to yield shikimate (SA). The polypeptide is Shikimate dehydrogenase (NADP(+)) (Magnetococcus marinus (strain ATCC BAA-1437 / JCM 17883 / MC-1)).